Consider the following 169-residue polypeptide: Hydroperoxy fatty acid reductase gpx1 (169 aa).

Cys-41 is an active-site residue.

It belongs to the glutathione peroxidase family. In terms of assembly, monomer.

The catalysed reaction is a hydroperoxy polyunsaturated fatty acid + NADPH + H(+) = a hydroxy polyunsaturated fatty acid + NADP(+) + H2O. Mercaptosuccinate, pCMB, and nethylmaleimide act as inhibitors of the catalytic activity. In terms of biological role, hydroperoxy fatty acid reductase essential for the removal of lipid hydroperoxides under normal and stress conditions, leading to the protection of membrane integrity. The protein is Hydroperoxy fatty acid reductase gpx1 (gpx1) of Synechocystis sp. (strain ATCC 27184 / PCC 6803 / Kazusa).